A 240-amino-acid polypeptide reads, in one-letter code: Large ribosomal subunit protein uL2 (240 aa).

Residues 1–10 are compositionally biased toward polar residues; it reads MGHRISTQSR. Disordered stretches follow at residues 1–20 and 204–240; these read MGHR…YRAP and FGGG…GYRR.

Belongs to the universal ribosomal protein uL2 family. Part of the 50S ribosomal subunit. Forms a bridge to the 30S subunit in the 70S ribosome.

In terms of biological role, one of the primary rRNA binding proteins. Required for association of the 30S and 50S subunits to form the 70S ribosome, for tRNA binding and peptide bond formation. It has been suggested to have peptidyltransferase activity; this is somewhat controversial. Makes several contacts with the 16S rRNA in the 70S ribosome. The chain is Large ribosomal subunit protein uL2 from Methanocorpusculum labreanum (strain ATCC 43576 / DSM 4855 / Z).